The sequence spans 749 residues: Taperin (749 aa).

A disordered region spans residues 144–348 (PAAPCRRGSP…IRPSSKPDME (205 aa)). 3 stretches are compositionally biased toward polar residues: residues 169 to 179 (SAATRTPTNRS), 230 to 239 (LQKTGSNSFT), and 250 to 266 (VNRS…SPTG). S274 is modified (phosphoserine). Over residues 323-335 (QRQWVSSATSAND) the composition is skewed to polar residues. The segment covering 337-347 (FEIRPSSKPDM) has biased composition (basic and acidic residues). Phosphoserine is present on residues S401, S457, and S501. Disordered regions lie at residues 502 to 586 (EEEA…TTLE), 636 to 673 (FEYP…SEKP), and 730 to 749 (LTPA…ALYF). 2 stretches are compositionally biased toward polar residues: residues 534-544 (ELLNRGSNTFT) and 558-570 (HLSQ…QQGA). The span at 647–668 (EEAEEEEEEEGEEDGEEEEVGP) shows a compositional bias: acidic residues.

This sequence belongs to the taperin family. In terms of assembly, interacts with GRXCR2; the interaction restricts TPRN to the stereocilum basal region. Interacts with actin ACTB; the interaction may stabilize stereocilia. Interacts with CLIC5. Interacts with PTPRQ. TPRN, CLIC5 and PTPQR form concentric rings at the base of stereocilia and may form a complex. Interacts with phosphatase PPP1CA; the interaction results in inhibition of PPP1CA phosphatase activity. Interacts with DNA damage response proteins XRCC6/KU70, XRCC5/KU80, PARP1, TOP1 and TOP2A; these interactions recruit TPRN to sites of DNA damage where it may play a role in DNA repair. In the organ of Corti, expressed in the inner ear hair cell stereocilia and the supporting cells (at protein level). Expressed in the sensory epithelia of the organ of Corti and vestibular end organs and, to a lesser extent, in Reisner's membrane and the spiral ligament (at protein level). At postnatal day 2, expression is detected in cochlea, liver, brain, kidney, heart and lung.

The protein localises to the cell projection. It localises to the stereocilium. The protein resides in the microvillus. It is found in the nucleus. Its subcellular location is the nucleoplasm. The protein localises to the cytoplasm. Its function is as follows. Essential for hearing. Required for maintenance of stereocilia on both inner and outer hair cells. Necessary for the integrity of the stereociliary rootlet. May act as an actin cytoskeleton regulator involved in the regulation of actin dynamics at the pointed end in hair cells. Forms rings at the base of stereocilia and binds actin filaments in the stereocilia which may stabilize the stereocilia. Acts as a strong inhibitor of PPP1CA phosphatase activity. Recruited to sites of DNA damage and may play a role in DNA damage repair. This is Taperin (Tprn) from Mus musculus (Mouse).